A 428-amino-acid polypeptide reads, in one-letter code: 3-phosphoshikimate 1-carboxyvinyltransferase (428 aa).

Residues lysine 23, serine 24, and arginine 28 each contribute to the 3-phosphoshikimate site. Lysine 23 is a binding site for phosphoenolpyruvate. Residues glycine 97 and arginine 125 each coordinate phosphoenolpyruvate. 7 residues coordinate 3-phosphoshikimate: serine 170, serine 171, glutamine 172, serine 198, aspartate 314, asparagine 337, and lysine 341. Glutamine 172 serves as a coordination point for phosphoenolpyruvate. The active-site Proton acceptor is the aspartate 314. Phosphoenolpyruvate is bound by residues arginine 345, arginine 387, and lysine 412.

The protein belongs to the EPSP synthase family. In terms of assembly, monomer.

The protein resides in the cytoplasm. The enzyme catalyses 3-phosphoshikimate + phosphoenolpyruvate = 5-O-(1-carboxyvinyl)-3-phosphoshikimate + phosphate. Its pathway is metabolic intermediate biosynthesis; chorismate biosynthesis; chorismate from D-erythrose 4-phosphate and phosphoenolpyruvate: step 6/7. Its function is as follows. Catalyzes the transfer of the enolpyruvyl moiety of phosphoenolpyruvate (PEP) to the 5-hydroxyl of shikimate-3-phosphate (S3P) to produce enolpyruvyl shikimate-3-phosphate and inorganic phosphate. This chain is 3-phosphoshikimate 1-carboxyvinyltransferase, found in Yersinia pestis bv. Antiqua (strain Antiqua).